A 466-amino-acid chain; its full sequence is MAIQVFNSLTRKKEPFVPLEEGKVKMYVCGPTVYNYIHIGNARPPIVYDMIRRYLKYRGYEVLFVSNFTDVDDKIIRVANELGEDVFAVANRFIEAYKQDTSALGVLEADHHPRVTETMSEIISFIRVLEEKGYAYEQGGDVYFRTRKFKEYGKLSAQSIDDLLSGARIEVDERKEDPLDFVLWKAAKEGEVSWDSPWGKGRPGWHIECSAMVKKYLGDTIDIHAGGQDLKFPHHENEIAQSECMTGKPMANYWLHNGFINLDNEKMSKSLGNVVLANEMIRQHSAEVLRFFMLSAHYRSPINFSDELLEGAKRGLERLQTAVSSLVHRLQESADFGGTEPWLERIDEFRGRFIEEMDDDFNSANGIAVLFDLAKEANRYLREEQTSKAVLQSFIDLFNELGGVLGVTLNRQEELLDEEIERLIEERNEARKAKNFQRADDIRDQLKAEGIILEDTPQGVRWKRGS.

Residue Cys29 participates in Zn(2+) binding. Positions 31–41 (PTVYNYIHIGN) match the 'HIGH' region motif. Residues Cys209, His234, and Glu238 each coordinate Zn(2+). Residues 266-270 (KMSKS) carry the 'KMSKS' region motif. Lys269 is an ATP binding site. Ser270 is modified (phosphoserine).

This sequence belongs to the class-I aminoacyl-tRNA synthetase family. As to quaternary structure, monomer. Zn(2+) serves as cofactor.

It is found in the cytoplasm. The catalysed reaction is tRNA(Cys) + L-cysteine + ATP = L-cysteinyl-tRNA(Cys) + AMP + diphosphate. This is Cysteine--tRNA ligase (cysS) from Halalkalibacterium halodurans (strain ATCC BAA-125 / DSM 18197 / FERM 7344 / JCM 9153 / C-125) (Bacillus halodurans).